Consider the following 491-residue polypeptide: Immediate early protein IE1 (491 aa).

A compositionally biased stretch (basic and acidic residues) spans 1 to 11 (MESSAKRKMDP). Residues 1–24 (MESSAKRKMDPDNPDEGPSSKVPR) are nuclear localization signal. Positions 1 to 30 (MESSAKRKMDPDNPDEGPSSKVPRPETPVT) are disordered. Residues 132-346 (ILDKVHEPFE…SVMKRRIEEI (215 aa)) are interaction with host PML, interference with PML sumoylation and disruption of PML-associated nuclear bodies. Positions 373–445 (AIAEESDEEE…EEGAQEERED (73 aa)) are interaction with host STAT2. Residues 410–420 (ATIPLSSVIVA) are modulation of STAT3/STAT1 signaling. Residues 410–445 (ATIPLSSVIVAENSDQEESEQSDEEEEEGAQEERED) are interaction with host STAT3. The segment at 421 to 472 (ENSDQEESEQSDEEEEEGAQEEREDTVSVKSEPVSEIEEVAPEEEEDGAEEP) is acidic. The segment at 421 to 491 (ENSDQEESEQ…PMVTRSKADQ (71 aa)) is disordered. Over residues 423–444 (SDQEESEQSDEEEEEGAQEERE) the composition is skewed to acidic residues. Positions 449–452 (VKSE) are interaction with host SUMO1. A Glycyl lysine isopeptide (Lys-Gly) (interchain with G-Cter in SUMO) cross-link involves residue Lys-450. Over residues 455-470 (SEIEEVAPEEEEDGAE) the composition is skewed to acidic residues. The tract at residues 475 to 491 (SGGKSTHPMVTRSKADQ) is chromosome-tethering domain (CTD), binding to histones.

It belongs to the HHV-5 IE1 protein family. As to quaternary structure, forms homodimers. Interacts with human p53/TP53; this interaction inhibits p53/TP53-dependent transactivation activity. Interacts with host STAT1. Interacts with host STAT2; this interaction promotes viral growth and counteracts the antiviral interferon response. May also interact with the host STAT1-STAT2 heterodimer. Interacts with host STAT3; this interaction leads to STAT3 nuclear accumulation and disruption of IL6-induced STAT3 phosphorylation. Interacts with host PML; this interaction inhibits host PML de novo sumoylation and probably inhibits PML regulation of type I and type II interferon-induced gene expression. Interacts with host DAXX. Interacts with host SP100. Interacts with host E2F1. Interacts with host RB1. Interacts with host HDAC1; this interaction inhibits histone deacetylation and promotes viral transcription. Interacts with host HDAC2; this interaction inhibits histone deacetylation and promotes viral transcription. Interacts with host HDAC3; this interaction inhibits histone deacetylation and promotes viral transcription. Interacts with host PLSCR1; this interaction inhibits IE1 transactivating activity. Sumoylated by host PML/nuclear domain 10. Sumoylation abolishes the interaction with host STAT2 and thus the IE1-mediated repression of interferon-stimulated genes.

The protein localises to the host nucleus. Plays an important role in transactivating viral early genes as well as activating its own promoter, probably by altering the viral chromatin structure. Expression of IE1 and IE2 proteins is critical for the establishment of lytic infection and reactivation from viral latency. Disrupts PML-associated ND10 nuclear bodies by interfering with host PML and SP100 sumoylation thereby altering the regulation of type I and type II interferon-induced gene expression. Promotes efficient viral growth by interacting with and directing host SP100 to degradation, leading to enhanced acetylation level of histones. In addition, functions in counteracting the host innate antiviral response. Inhibits the type I interferon pathway by directly interacting with and sequestrating host STAT2. Also targets type II interferon pathway by repressing IL6- and STAT3 target genes. Repression of STAT3 genes is due to STAT3 nuclear accumulation and disruption of IL6-induced STAT3 phosphorylation by IE1. This repression is followed by phosphorylation and activation of STAT1. Inhibits host ISG transcription by sequestering host ISGF3 in a PML- and STAT2- binding dependent manner. Alters host cell cycle progression, probably through its interaction with host E2F1 or RB1 that overcomes the RB1-mediated repression of E2F-responsive promoters. May act as a E3 ubiquitin ligase targeting several host proteins including HES1 and SP100A for ubiquitination and subsequent proteasomal degradation. Impairs the radial migration of immature neurons by downregulating Gap junction alpha-1 protein/GJA1 also via ubiquitination and degradation. The chain is Immediate early protein IE1 (UL123) from Human cytomegalovirus (strain Towne) (HHV-5).